Consider the following 1252-residue polypeptide: ATP-dependent helicase/nuclease subunit A (1252 aa).

The UvrD-like helicase ATP-binding domain occupies 6 to 489 (TNWTEEQKEA…VLLYKNFRSR (484 aa)). 27–34 (AAAGSGKT) serves as a coordination point for ATP. Residues 523–811 (ANYEEIEENL…RIMSIHKSKG (289 aa)) form the UvrD-like helicase C-terminal domain.

The protein belongs to the helicase family. AddA subfamily. Heterodimer of AddA and AddB/RexB. Mg(2+) serves as cofactor.

The catalysed reaction is Couples ATP hydrolysis with the unwinding of duplex DNA by translocating in the 3'-5' direction.. The enzyme catalyses ATP + H2O = ADP + phosphate + H(+). Its function is as follows. The heterodimer acts as both an ATP-dependent DNA helicase and an ATP-dependent, dual-direction single-stranded exonuclease. Recognizes the chi site generating a DNA molecule suitable for the initiation of homologous recombination. The AddA nuclease domain is required for chi fragment generation; this subunit has the helicase and 3' -&gt; 5' nuclease activities. In Clostridium acetobutylicum (strain ATCC 824 / DSM 792 / JCM 1419 / IAM 19013 / LMG 5710 / NBRC 13948 / NRRL B-527 / VKM B-1787 / 2291 / W), this protein is ATP-dependent helicase/nuclease subunit A.